The sequence spans 209 residues: Thymidine kinase (209 aa).

Residues Gly-25–Thr-32 and Asp-103–Gln-106 each bind ATP. Glu-104 serves as the catalytic Proton acceptor. Positions 160, 163, 198, and 201 each coordinate Zn(2+).

This sequence belongs to the thymidine kinase family. In terms of assembly, homotetramer.

It is found in the cytoplasm. The enzyme catalyses thymidine + ATP = dTMP + ADP + H(+). The sequence is that of Thymidine kinase from Mycoplasma capricolum subsp. capricolum (strain California kid / ATCC 27343 / NCTC 10154).